We begin with the raw amino-acid sequence, 417 residues long: MCQRILILGTGITGKSVARFLYQQGHYLIGADNSLESLISVDHLHDRLLMGASEFPENIDLVIRSPGIKPYHPWVEQAVSLKIPVVTDIQVALKTPEFQRYPSFGITGSNGKTTTTLFLTHLLNTLGIPAIAMGNIGLPILDHMGQPGVRVVEISSFQLATQEEHIPALSGSVFLNFSRNHLDYHRNLDAYFDAKLRIQKCLRQDKTFWVWEECSLGNSYQIYSEEIEEILDKGDALKPIYLHDRDNYCAAYALANEVGWVSPEGFLKAIRTFEKPAHRLEYLGKKDGVHYINDSKATTVTAVEKALMAVGKDVIVILGGKDKGGDFPALASVLSQTTKHVIAMGECRQTIADALSEKIPLTLSKDLQEAVSIAQTIAQEGDTVLLSPGCASFDQFQSFKERGAYFKLLIREMQAVR.

108 to 114 provides a ligand contact to ATP; that stretch reads GSNGKTT.

This sequence belongs to the MurCDEF family.

The protein resides in the cytoplasm. It catalyses the reaction UDP-N-acetyl-alpha-D-muramoyl-L-alanine + D-glutamate + ATP = UDP-N-acetyl-alpha-D-muramoyl-L-alanyl-D-glutamate + ADP + phosphate + H(+). The protein operates within cell wall biogenesis; peptidoglycan biosynthesis. Its function is as follows. Cell wall formation. Catalyzes the addition of glutamate to the nucleotide precursor UDP-N-acetylmuramoyl-L-alanine (UMA). This Chlamydia pneumoniae (Chlamydophila pneumoniae) protein is UDP-N-acetylmuramoylalanine--D-glutamate ligase.